Reading from the N-terminus, the 494-residue chain is Glycerol kinase (494 aa).

Thr13 lines the ADP pocket. Thr13, Thr14, and Ser15 together coordinate ATP. A sn-glycerol 3-phosphate-binding site is contributed by Thr13. Arg17 is an ADP binding site. Arg83, Glu84, Tyr135, and Asp244 together coordinate sn-glycerol 3-phosphate. 5 residues coordinate glycerol: Arg83, Glu84, Tyr135, Asp244, and Gln245. Residues Thr266 and Gly309 each coordinate ADP. ATP is bound by residues Thr266, Gly309, Gln313, and Gly410. Gly410 and Asn414 together coordinate ADP.

Belongs to the FGGY kinase family.

The enzyme catalyses glycerol + ATP = sn-glycerol 3-phosphate + ADP + H(+). It functions in the pathway polyol metabolism; glycerol degradation via glycerol kinase pathway; sn-glycerol 3-phosphate from glycerol: step 1/1. With respect to regulation, inhibited by fructose 1,6-bisphosphate (FBP). Functionally, key enzyme in the regulation of glycerol uptake and metabolism. Catalyzes the phosphorylation of glycerol to yield sn-glycerol 3-phosphate. This is Glycerol kinase from Shewanella baltica (strain OS195).